We begin with the raw amino-acid sequence, 405 residues long: Histone deacetylase clr6 (405 aa).

The interval 6 to 318 is histone deacetylase; the sequence is KKVSYFYDED…WTYETGLLAG (313 aa). The active site involves H138.

Belongs to the histone deacetylase family. HD type 1 subfamily. In terms of assembly, heterotetramer of alp13, clr6, prw1 and pst2.

Its subcellular location is the nucleus. It catalyses the reaction N(6)-acetyl-L-lysyl-[histone] + H2O = L-lysyl-[histone] + acetate. In terms of biological role, responsible for the deacetylation of lysine residues on the N-terminal part of the core histones (H2A, H2B, H3 and H4). Histone deacetylation gives a tag for epigenetic repression and plays an important role in transcriptional regulation, cell cycle progression and developmental events. Histone deacetylases act via the formation of large multiprotein complexes. Has a role in chromatin assembly and chromosome segregation. This Schizosaccharomyces pombe (strain 972 / ATCC 24843) (Fission yeast) protein is Histone deacetylase clr6 (clr6).